A 341-amino-acid polypeptide reads, in one-letter code: Protein-glutamate methylesterase/protein-glutamine glutaminase 2 (341 aa).

Positions 11 to 126 (RVLVADDSEL…DLGEYGRLIR (116 aa)) constitute a Response regulatory domain. 4-aspartylphosphate is present on D62. The CheB-type methylesterase domain occupies 152–341 (PARAARVEVV…IPRALRELTR (190 aa)). Catalysis depends on residues S166, H193, and D285.

The protein belongs to the CheB family. Phosphorylated by CheA. Phosphorylation of the N-terminal regulatory domain activates the methylesterase activity.

It is found in the cytoplasm. The enzyme catalyses [protein]-L-glutamate 5-O-methyl ester + H2O = L-glutamyl-[protein] + methanol + H(+). It carries out the reaction L-glutaminyl-[protein] + H2O = L-glutamyl-[protein] + NH4(+). In terms of biological role, involved in chemotaxis. Part of a chemotaxis signal transduction system that modulates chemotaxis in response to various stimuli. Catalyzes the demethylation of specific methylglutamate residues introduced into the chemoreceptors (methyl-accepting chemotaxis proteins or MCP) by CheR. Also mediates the irreversible deamidation of specific glutamine residues to glutamic acid. The sequence is that of Protein-glutamate methylesterase/protein-glutamine glutaminase 2 from Anaeromyxobacter dehalogenans (strain 2CP-C).